The sequence spans 49 residues: Large ribosomal subunit protein bL33A (49 aa).

It belongs to the bacterial ribosomal protein bL33 family.

This Geobacillus thermodenitrificans (strain NG80-2) protein is Large ribosomal subunit protein bL33A.